The following is a 90-amino-acid chain: Phosphocarrier protein HPr (90 aa).

An HPr domain is found at 1-89; it reads MPAREITIIN…ELINNFFDEG (89 aa). His-15 functions as the Pros-phosphohistidine intermediate in the catalytic mechanism.

This sequence belongs to the HPr family.

The protein localises to the cytoplasm. In terms of biological role, general (non sugar-specific) component of the phosphoenolpyruvate-dependent sugar phosphotransferase system (sugar PTS). This major carbohydrate active-transport system catalyzes the phosphorylation of incoming sugar substrates concomitantly with their translocation across the cell membrane. The phosphoryl group from phosphoenolpyruvate (PEP) is transferred to the phosphoryl carrier protein HPr by enzyme I. Phospho-HPr then transfers it to the PTS EIIA domain. This is Phosphocarrier protein HPr (ptsH) from Pseudomonas putida (Arthrobacter siderocapsulatus).